We begin with the raw amino-acid sequence, 450 residues long: UDP-N-acetylmuramoylalanine--D-glutamate ligase (450 aa).

Residue 119 to 125 (GSNGKTT) participates in ATP binding.

It belongs to the MurCDEF family.

It localises to the cytoplasm. The catalysed reaction is UDP-N-acetyl-alpha-D-muramoyl-L-alanine + D-glutamate + ATP = UDP-N-acetyl-alpha-D-muramoyl-L-alanyl-D-glutamate + ADP + phosphate + H(+). The protein operates within cell wall biogenesis; peptidoglycan biosynthesis. Its function is as follows. Cell wall formation. Catalyzes the addition of glutamate to the nucleotide precursor UDP-N-acetylmuramoyl-L-alanine (UMA). This is UDP-N-acetylmuramoylalanine--D-glutamate ligase from Bacillus cereus (strain B4264).